Consider the following 64-residue polypeptide: Sec-independent protein translocase protein TatA (64 aa).

A helical membrane pass occupies residues 10 to 30 (LVLILGIALIIFGPGKLPELG).

The protein belongs to the TatA/E family. In terms of assembly, forms a complex with TatC.

Its subcellular location is the cell membrane. In terms of biological role, part of the twin-arginine translocation (Tat) system that transports large folded proteins containing a characteristic twin-arginine motif in their signal peptide across membranes. TatA could form the protein-conducting channel of the Tat system. The sequence is that of Sec-independent protein translocase protein TatA from Alkaliphilus oremlandii (strain OhILAs) (Clostridium oremlandii (strain OhILAs)).